The sequence spans 275 residues: Formamidopyrimidine-DNA glycosylase (275 aa).

Pro-2 functions as the Schiff-base intermediate with DNA in the catalytic mechanism. Glu-3 acts as the Proton donor in catalysis. The active-site Proton donor; for beta-elimination activity is Lys-58. Residues His-91, Arg-109, and Arg-154 each contribute to the DNA site. Residues 240 to 274 (AVYERAGLPCRVCGTPIRRLVQGQRATYYCPSCQK) form an FPG-type zinc finger. Catalysis depends on Arg-264, which acts as the Proton donor; for delta-elimination activity.

The protein belongs to the FPG family. Monomer. Zn(2+) serves as cofactor.

The enzyme catalyses Hydrolysis of DNA containing ring-opened 7-methylguanine residues, releasing 2,6-diamino-4-hydroxy-5-(N-methyl)formamidopyrimidine.. It carries out the reaction 2'-deoxyribonucleotide-(2'-deoxyribose 5'-phosphate)-2'-deoxyribonucleotide-DNA = a 3'-end 2'-deoxyribonucleotide-(2,3-dehydro-2,3-deoxyribose 5'-phosphate)-DNA + a 5'-end 5'-phospho-2'-deoxyribonucleoside-DNA + H(+). Involved in base excision repair of DNA damaged by oxidation or by mutagenic agents. Acts as a DNA glycosylase that recognizes and removes damaged bases. Has a preference for oxidized purines, such as 7,8-dihydro-8-oxoguanine (8-oxoG). Has AP (apurinic/apyrimidinic) lyase activity and introduces nicks in the DNA strand. Cleaves the DNA backbone by beta-delta elimination to generate a single-strand break at the site of the removed base with both 3'- and 5'-phosphates. The chain is Formamidopyrimidine-DNA glycosylase from Bordetella petrii (strain ATCC BAA-461 / DSM 12804 / CCUG 43448).